The sequence spans 224 residues: Peptidyl-prolyl cis-trans isomerase FKBP3 (224 aa).

Alanine 2 bears the N-acetylalanine mark. Serine 36 is modified (phosphoserine). A disordered region spans residues 87–119 (NVKLNEDKPKETKSEETPDEGPPKYTKSVLKKG). Over residues 89–102 (KLNEDKPKETKSEE) the composition is skewed to basic and acidic residues. An N6-acetyllysine modification is found at lysine 99. The region spanning 128 to 224 (GDVVHCWYTG…IFEVELVDID (97 aa)) is the PPIase FKBP-type domain. Serine 152 is subject to Phosphoserine. Lysine 170 is modified (N6-acetyllysine).

Belongs to the FKBP-type PPIase family.

Its subcellular location is the nucleus. The catalysed reaction is [protein]-peptidylproline (omega=180) = [protein]-peptidylproline (omega=0). With respect to regulation, inhibited preferentially by rapamycin over FK506. Functionally, FK506- and rapamycin-binding proteins (FKBPs) constitute a family of receptors for the two immunosuppressants which inhibit T-cell proliferation by arresting two distinct cytoplasmic signal transmission pathways. PPIases accelerate the folding of proteins. The polypeptide is Peptidyl-prolyl cis-trans isomerase FKBP3 (FKBP3) (Oryctolagus cuniculus (Rabbit)).